The sequence spans 287 residues: MLSLGFSLPPPSDNKLIITNNNQYNYRTNLANVCSNNNVNAVGDQLVTLPEGLKHVAVIMDGHRRWAKNKGLTVKQGHRAGGEKIQVLTRLCSQWGVKVLTIFAFSTENWVRLEEEVDFLMKLFLELIGSQEILDEWTRDGRRVSFIGDKSIFSKSLQEALAVMEERTKFNSGLHVIIAINYSGRQDILQATKSIAIKVKNGDLTVKDIDQSLFEQELDTHCTEFSEPDLLIRTSGEKRVSNFMLWQLAYTELYFANKLFPDMEEADFIEALTSFKSRQRRYGGKKI.

Residues 1–34 (MLSLGFSLPPPSDNKLIITNNNQYNYRTNLANVC) constitute a chloroplast transit peptide. Asp61 is a catalytic residue.

It belongs to the UPP synthase family. The cofactor is Mg(2+). In terms of tissue distribution, expressed in leaf trichomes and stem trichomes.

The protein resides in the plastid. It localises to the chloroplast. Uses geranylgeranyl diphosphate to catalyze the cis-prenyl chain elongation and produce polyprenyl diphosphate with a chain of 35 carbons. The chain is Cis-prenyltransferase 7, chloroplastic from Solanum lycopersicum (Tomato).